Here is a 289-residue protein sequence, read N- to C-terminus: Urease accessory protein UreD (289 aa).

Belongs to the UreD family. As to quaternary structure, ureD, UreF and UreG form a complex that acts as a GTP-hydrolysis-dependent molecular chaperone, activating the urease apoprotein by helping to assemble the nickel containing metallocenter of UreC. The UreE protein probably delivers the nickel.

The protein localises to the cytoplasm. Functionally, required for maturation of urease via the functional incorporation of the urease nickel metallocenter. The polypeptide is Urease accessory protein UreD (Cupriavidus pinatubonensis (strain JMP 134 / LMG 1197) (Cupriavidus necator (strain JMP 134))).